A 160-amino-acid polypeptide reads, in one-letter code: Sec-independent protein translocase protein TatB (160 aa).

A helical transmembrane segment spans residues 1-21; it reads MFGMGFFEILVVLVVAIIFLG. The segment at 118–160 is disordered; it reads HLNEEVSNEEALNKEVSSDESPKEVQLATDNNTKEHDKEKEHV. Basic and acidic residues-rich tracts occupy residues 128–140 and 149–160; these read ALNK…ESPK and NTKEHDKEKEHV.

It belongs to the TatB family. As to quaternary structure, the Tat system comprises two distinct complexes: a TatABC complex, containing multiple copies of TatA, TatB and TatC subunits, and a separate TatA complex, containing only TatA subunits. Substrates initially bind to the TatABC complex, which probably triggers association of the separate TatA complex to form the active translocon.

It localises to the cell inner membrane. Functionally, part of the twin-arginine translocation (Tat) system that transports large folded proteins containing a characteristic twin-arginine motif in their signal peptide across membranes. Together with TatC, TatB is part of a receptor directly interacting with Tat signal peptides. TatB may form an oligomeric binding site that transiently accommodates folded Tat precursor proteins before their translocation. This chain is Sec-independent protein translocase protein TatB, found in Helicobacter pylori (strain HPAG1).